Consider the following 118-residue polypeptide: Large ribosomal subunit protein bL19 (118 aa).

It belongs to the bacterial ribosomal protein bL19 family.

This protein is located at the 30S-50S ribosomal subunit interface and may play a role in the structure and function of the aminoacyl-tRNA binding site. The protein is Large ribosomal subunit protein bL19 of Campylobacter lari (strain RM2100 / D67 / ATCC BAA-1060).